The following is a 202-amino-acid chain: Ribosome maturation factor RimM (202 aa).

The PRC barrel domain maps to 121–202 (KDEYYWVDLI…CITVDWQPDY (82 aa)).

The protein belongs to the RimM family. As to quaternary structure, binds ribosomal protein uS19.

Its subcellular location is the cytoplasm. An accessory protein needed during the final step in the assembly of 30S ribosomal subunit, possibly for assembly of the head region. Essential for efficient processing of 16S rRNA. May be needed both before and after RbfA during the maturation of 16S rRNA. It has affinity for free ribosomal 30S subunits but not for 70S ribosomes. In Polaromonas sp. (strain JS666 / ATCC BAA-500), this protein is Ribosome maturation factor RimM.